We begin with the raw amino-acid sequence, 509 residues long: Movement protein (509 aa).

The protein resides in the host cell junction. Its subcellular location is the host plasmodesma. The protein localises to the host cytoplasm. Its function is as follows. Transports viral genome to neighboring plant cells directly through plasmosdesmata, without any budding. The movement protein allows efficient cell to cell propagation, by bypassing the host cell wall barrier. In Rice dwarf virus (isolate Fujian) (RDV), this protein is Movement protein.